We begin with the raw amino-acid sequence, 650 residues long: Phosphatidylinositol-3,5-bisphosphate 3-phosphatase MTMR14 (650 aa).

Residues 1-27 (MAGARAAAAAASAGSSASSGNQPPQEL) are disordered. Residue lysine 194 is modified to N6-acetyllysine. Asparagine 226 carries an N-linked (GlcNAc...) asparagine glycan. Cysteine 330 acts as the Phosphocysteine intermediate in catalysis. 5 residues coordinate a 1,2-diacyl-sn-glycero-3-phospho-(1D-myo-inositol-3,5-bisphosphate): glycine 333, tryptophan 334, aspartate 335, arginine 336, and arginine 382. A 1,2-diacyl-sn-glycero-3-phospho-(1D-myo-inositol-3-phosphate) contacts are provided by glycine 333, tryptophan 334, aspartate 335, arginine 336, and arginine 382. Positions 476 to 546 (AAWRKSHSSS…PRSVDHPLPG (71 aa)) are disordered. Residue serine 518 is modified to Phosphoserine. N-linked (GlcNAc...) asparagine glycosylation is present at asparagine 519. Serine 530, serine 580, and serine 624 each carry phosphoserine. At arginine 638 the chain carries Omega-N-methylarginine.

Belongs to the protein-tyrosine phosphatase family. Non-receptor class myotubularin subfamily. In terms of tissue distribution, expressed in various tissues, including heart, skeletal muscle, placenta, liver, lung, kidney and pancreas.

Its subcellular location is the cytoplasm. It carries out the reaction a 1,2-diacyl-sn-glycero-3-phospho-(1D-myo-inositol-3,5-bisphosphate) + H2O = a 1,2-diacyl-sn-glycero-3-phospho-(1D-myo-inositol-5-phosphate) + phosphate. The enzyme catalyses a 1,2-diacyl-sn-glycero-3-phospho-(1D-myo-inositol-3-phosphate) + H2O = a 1,2-diacyl-sn-glycero-3-phospho-(1D-myo-inositol) + phosphate. Functionally, lipid phosphatase that specifically dephosphorylates the D-3 position of phosphatidylinositol 3-phosphate and phosphatidylinositol 3,5-bisphosphate, generating phosphatidylinositol and phosphatidylinositol 5-phosphate. The protein is Phosphatidylinositol-3,5-bisphosphate 3-phosphatase MTMR14 of Homo sapiens (Human).